The primary structure comprises 224 residues: UPF0111 protein TC_0063 (224 aa).

It belongs to the UPF0111 family.

This chain is UPF0111 protein TC_0063, found in Chlamydia muridarum (strain MoPn / Nigg).